A 613-amino-acid polypeptide reads, in one-letter code: V-type proton ATPase catalytic subunit A isoform 2 (613 aa).

Residue 240–247 (GAFGCGKT) participates in ATP binding.

This sequence belongs to the ATPase alpha/beta chains family. In terms of assembly, V-ATPase is a heteromultimeric enzyme composed of a peripheral catalytic V1 complex (main components: subunits A, B, C, D, E, and F) attached to an integral membrane V0 proton pore complex (main component: the proteolipid protein).

It carries out the reaction ATP + H2O + 4 H(+)(in) = ADP + phosphate + 5 H(+)(out). Functionally, catalytic subunit of the peripheral V1 complex of vacuolar ATPase. V-ATPase vacuolar ATPase is responsible for acidifying a variety of intracellular compartments in eukaryotic cells. The chain is V-type proton ATPase catalytic subunit A isoform 2 from Acetabularia acetabulum (Mermaid's wine glass).